The chain runs to 435 residues: Arginine biosynthesis bifunctional protein ArgJ, mitochondrial (435 aa).

The substrate site is built by Thr-167, Lys-193, Thr-204, Glu-291, Asn-430, and Thr-435. Residue Thr-204 is the Nucleophile of the active site.

The protein belongs to the ArgJ family. In terms of assembly, heterodimer of an alpha and a beta chain. In terms of processing, the alpha and beta chains are autoproteolytically processed from a single precursor protein within the mitochondrion.

It is found in the mitochondrion matrix. The catalysed reaction is N(2)-acetyl-L-ornithine + L-glutamate = N-acetyl-L-glutamate + L-ornithine. It carries out the reaction L-glutamate + acetyl-CoA = N-acetyl-L-glutamate + CoA + H(+). It participates in amino-acid biosynthesis; L-arginine biosynthesis; L-ornithine and N-acetyl-L-glutamate from L-glutamate and N(2)-acetyl-L-ornithine (cyclic): step 1/1. The protein operates within amino-acid biosynthesis; L-arginine biosynthesis; N(2)-acetyl-L-ornithine from L-glutamate: step 1/4. Functionally, catalyzes two activities which are involved in the cyclic version of arginine biosynthesis: the synthesis of acetylglutamate from glutamate and acetyl-CoA, and of ornithine by transacetylation between acetylornithine and glutamate. The protein is Arginine biosynthesis bifunctional protein ArgJ, mitochondrial of Heterostelium pallidum (strain ATCC 26659 / Pp 5 / PN500) (Cellular slime mold).